The chain runs to 277 residues: Large ribosomal subunit protein uL2c (277 aa).

The interval 223–277 (VVMNPIDHPHGGGEGRAPIGRKKPLTPWGHPALGKRSRKNNKYSDTLILRRRKNS) is disordered.

This sequence belongs to the universal ribosomal protein uL2 family. In terms of assembly, part of the 50S ribosomal subunit.

Its subcellular location is the plastid. It localises to the chloroplast. This is Large ribosomal subunit protein uL2c (rpl2) from Marchantia polymorpha (Common liverwort).